We begin with the raw amino-acid sequence, 347 residues long: Anthranilate phosphoribosyltransferase (347 aa).

5-phospho-alpha-D-ribose 1-diphosphate is bound by residues Gly-86, 89 to 90 (GD), Thr-94, 96 to 99 (NIST), 114 to 122 (KHGNRSVSS), and Ser-126. Gly-86 contacts anthranilate. Position 98 (Ser-98) interacts with Mg(2+). Asn-117 contacts anthranilate. Arg-172 lines the anthranilate pocket. Mg(2+) contacts are provided by Asp-230 and Glu-231.

This sequence belongs to the anthranilate phosphoribosyltransferase family. Homodimer. Mg(2+) is required as a cofactor.

It carries out the reaction N-(5-phospho-beta-D-ribosyl)anthranilate + diphosphate = 5-phospho-alpha-D-ribose 1-diphosphate + anthranilate. It participates in amino-acid biosynthesis; L-tryptophan biosynthesis; L-tryptophan from chorismate: step 2/5. Functionally, catalyzes the transfer of the phosphoribosyl group of 5-phosphorylribose-1-pyrophosphate (PRPP) to anthranilate to yield N-(5'-phosphoribosyl)-anthranilate (PRA). The sequence is that of Anthranilate phosphoribosyltransferase from Shewanella frigidimarina (strain NCIMB 400).